Reading from the N-terminus, the 236-residue chain is 2-C-methyl-D-erythritol 4-phosphate cytidylyltransferase (236 aa).

Belongs to the IspD/TarI cytidylyltransferase family. IspD subfamily.

The catalysed reaction is 2-C-methyl-D-erythritol 4-phosphate + CTP + H(+) = 4-CDP-2-C-methyl-D-erythritol + diphosphate. The protein operates within isoprenoid biosynthesis; isopentenyl diphosphate biosynthesis via DXP pathway; isopentenyl diphosphate from 1-deoxy-D-xylulose 5-phosphate: step 2/6. Functionally, catalyzes the formation of 4-diphosphocytidyl-2-C-methyl-D-erythritol from CTP and 2-C-methyl-D-erythritol 4-phosphate (MEP). The polypeptide is 2-C-methyl-D-erythritol 4-phosphate cytidylyltransferase (Burkholderia orbicola (strain AU 1054)).